A 118-amino-acid chain; its full sequence is p-cumate 2,3-dioxygenase system, ferredoxin component (118 aa).

In terms of domain architecture, Rieske spans 14–111; sequence VGLCATDDVA…VTVEGGQIFV (98 aa). Positions 54, 56, 74, and 77 each coordinate [2Fe-2S] cluster.

It belongs to the bacterial ring-hydroxylating dioxygenase ferredoxin component family. In terms of assembly, the p-cumate 2,3-dioxygenase multicomponent enzyme system is composed of an electron transfer component and a dioxygenase component (iron sulfur protein (ISP)). The electron transfer component is composed of a ferredoxin reductase (CmtAa) and a ferredoxin (CmtAd), and the dioxygenase component is formed of a large alpha subunit (CmtAb) and a small beta subunit (CmtAc). [2Fe-2S] cluster serves as cofactor.

Its pathway is aromatic compound metabolism; p-cumate degradation; acetaldehyde and pyruvate from p-cumate. Component of the p-cumate 2,3-dioxygenase multicomponent enzyme system which catalyzes the incorporation of both atoms of molecular oxygen into p-cumate to form cis-2,3-dihydroxy-2,3-dihydro-p-cumate. Functions as an intermediate electron transfer protein via a specific interaction with iron sulfur protein components (ISP)(CmtAb and CmtAc). The polypeptide is p-cumate 2,3-dioxygenase system, ferredoxin component (Pseudomonas putida (Arthrobacter siderocapsulatus)).